The sequence spans 356 residues: MAAEGWIWRWGWGRRCLGRPGLLGPGPGPTTPLFLLLLLGSVTADITDGNSEHLKREHSLIKPYQGVGSSSMPLWDFQGSTMLTSQYVRLTPDERSKEGSIWNHQPCFLKDWEMHVHFKVHGTGKKNLHGDGIALWYTRDRLVPGPVFGSKDNFHGLAIFLDTYPNDETTERVFPYISVMVNNGSLSYDHSKDGRWTELAGCTADFRNRDHDTFLAVRYSRGRLTVMTDLEDKNEWKNCIDITGVRLPTGYYFGASAGTGDLSDNHDIISMKLFQLMVEHTPDEESIDWTKIEPSVNFLKSPKDNVDDPTGNFRSGPLTGWRVFLLLLCALLGIVVCAVVGAVVFQKRQERNKRFY.

Residues 1-44 (MAAEGWIWRWGWGRRCLGRPGLLGPGPGPTTPLFLLLLLGSVTA) form the signal peptide. Residues 45-322 (DITDGNSEHL…FRSGPLTGWR (278 aa)) lie on the Lumenal side of the membrane. In terms of domain architecture, L-type lectin-like spans 52–276 (EHLKREHSLI…DIISMKLFQL (225 aa)). 2 residues coordinate a carbohydrate: serine 96 and aspartate 131. Ca(2+)-binding residues include aspartate 162, tyrosine 164, and asparagine 166. Residue 164–166 (YPN) participates in a carbohydrate binding. The N-linked (GlcNAc...) asparagine glycan is linked to asparagine 183. Histidine 190 contributes to the a carbohydrate binding site. Residue aspartate 193 participates in Ca(2+) binding. An intrachain disulfide couples cysteine 202 to cysteine 239. 260–262 (GDL) is an a carbohydrate binding site. Residues 323–345 (VFLLLLCALLGIVVCAVVGAVVF) form a helical membrane-spanning segment. The Cytoplasmic portion of the chain corresponds to 346–356 (QKRQERNKRFY).

Ca(2+) is required as a cofactor. In terms of tissue distribution, ubiquitous.

It is found in the endoplasmic reticulum-Golgi intermediate compartment membrane. The protein localises to the golgi apparatus membrane. It localises to the endoplasmic reticulum membrane. Functionally, plays a role as an intracellular lectin in the early secretory pathway. Interacts with N-acetyl-D-galactosamine and high-mannose type glycans and may also bind to O-linked glycans. Involved in the transport and sorting of glycoproteins carrying high mannose-type glycans. This chain is Vesicular integral-membrane protein VIP36 (LMAN2), found in Homo sapiens (Human).